The sequence spans 525 residues: GMP synthase [glutamine-hydrolyzing] (525 aa).

A Glutamine amidotransferase type-1 domain is found at K8–K207. The active-site Nucleophile is C85. Catalysis depends on residues H181 and E183. Residues W208–R400 enclose the GMPS ATP-PPase domain. S235–S241 contacts ATP.

Homodimer.

The catalysed reaction is XMP + L-glutamine + ATP + H2O = GMP + L-glutamate + AMP + diphosphate + 2 H(+). It participates in purine metabolism; GMP biosynthesis; GMP from XMP (L-Gln route): step 1/1. Catalyzes the synthesis of GMP from XMP. This chain is GMP synthase [glutamine-hydrolyzing], found in Shewanella amazonensis (strain ATCC BAA-1098 / SB2B).